The sequence spans 295 residues: Ubiquitin-conjugating enzyme E2-34 kDa (295 aa).

The UBC core domain maps to 7-169 (TASSLLLRQY…VKMEVERSKQ (163 aa)). The Glycyl thioester intermediate role is filled by C95. The segment at 185-295 (ISQSKLDEPE…EDVERVSKKI (111 aa)) is disordered. The residue at position 186 (S186) is a Phosphoserine. The span at 189–200 (KLDEPESNKDMA) shows a compositional bias: basic and acidic residues. 2 stretches are compositionally biased toward acidic residues: residues 207 to 226 (SDLD…DYDD) and 234 to 265 (EDDD…DSID). Residues 269 to 279 (VMDRKQPHKAE) show a composition bias toward basic and acidic residues. Phosphoserine occurs at positions 282 and 292.

This sequence belongs to the ubiquitin-conjugating enzyme family. In terms of assembly, interacts with CDC53. Component of the E3 ubiquitin ligase complexes SCF with CDC53, SKP1/CBF3D, HRT1 and some F-box proteins like MET30 and CDC4.

The protein localises to the cytoplasm. Its subcellular location is the nucleus. It carries out the reaction S-ubiquitinyl-[E1 ubiquitin-activating enzyme]-L-cysteine + [E2 ubiquitin-conjugating enzyme]-L-cysteine = [E1 ubiquitin-activating enzyme]-L-cysteine + S-ubiquitinyl-[E2 ubiquitin-conjugating enzyme]-L-cysteine.. The protein operates within protein modification; protein ubiquitination. Functionally, catalyzes the covalent attachment of ubiquitin to other proteins. Capable, in vitro, to ubiquitinate histone H2A. Its function is as follows. Mediates the initiation of DNA replication (transition of G1 to S phase in cell cycle). Essential component of the E3 ubiquitin ligase complex SCF (SKP1-CUL1-F-box protein), which mediates the ubiquitination and subsequent proteasomal degradation of target proteins. Involved in the regulation of methionine biosynthesis genes and in the degradation of CDC6 together with CDC4 and CDC53. In Saccharomyces cerevisiae (strain ATCC 204508 / S288c) (Baker's yeast), this protein is Ubiquitin-conjugating enzyme E2-34 kDa (CDC34).